We begin with the raw amino-acid sequence, 190 residues long: Putative glutathione-dependent formaldehyde-activating enzyme (190 aa).

Positions 19–165 (FKGGKLYCHC…FRKVGLQPYD (147 aa)) constitute a CENP-V/GFA domain. Positions 26, 28, 47, 49, 52, 94, and 97 each coordinate Zn(2+).

The protein belongs to the Gfa family. It depends on Zn(2+) as a cofactor.

It carries out the reaction S-(hydroxymethyl)glutathione = glutathione + formaldehyde. It participates in one-carbon metabolism; formaldehyde degradation; formate from formaldehyde (glutathione route): step 1/3. Functionally, catalyzes the condensation of formaldehyde and glutathione to S-hydroxymethylglutathione. The sequence is that of Putative glutathione-dependent formaldehyde-activating enzyme from Pyrenophora teres f. teres (strain 0-1) (Barley net blotch fungus).